The following is a 773-amino-acid chain: DNA polymerase (773 aa).

Disulfide bonds link Cys-428–Cys-442 and Cys-506–Cys-509.

The protein belongs to the DNA polymerase type-B family.

It catalyses the reaction DNA(n) + a 2'-deoxyribonucleoside 5'-triphosphate = DNA(n+1) + diphosphate. In terms of biological role, in addition to polymerase activity, this DNA polymerase exhibits 3' to 5' exonuclease activity. This is DNA polymerase (pol) from Thermococcus gorgonarius.